We begin with the raw amino-acid sequence, 299 residues long: Heat stress transcription factor B-2a (299 aa).

A DNA-binding region spans residues 21–115 (PTPFLTKTFN…LLREIQRRKI (95 aa)). A disordered region spans residues 119–157 (HQTVVAPSSEQRNQTMVVSPSNSGEDNNNNQVMSSSPSS). The interval 166–211 (TGNGGLSVELLEENEKLRSQNIQLNRELTQMKSICDNIYSLMSNYV) is hydrophobic repeat HR-A/B. Positions 261–264 (KRTR) match the Nuclear localization signal motif.

It belongs to the HSF family. Class B subfamily. Homotrimer. Exhibits temperature-dependent phosphorylation.

Its subcellular location is the nucleus. Its function is as follows. Transcriptional regulator that specifically binds DNA sequence 5'-AGAAnnTTCT-3' known as heat shock promoter elements (HSE). This is Heat stress transcription factor B-2a (HSFB2A) from Arabidopsis thaliana (Mouse-ear cress).